Consider the following 456-residue polypeptide: Gamma-aminobutyric acid receptor subunit alpha-1 (456 aa).

The N-terminal stretch at 1-27 (MRKSPGLSDYLWAWILLLSTLTGRSYG) is a signal peptide. Topologically, residues 28-253 (QPSLQDELKD…FHLKRKIGYF (226 aa)) are extracellular. A glycan (N-linked (GlcNAc...) asparagine) is linked at Asn-38. Arg-94 provides a ligand contact to 4-aminobutanoate. Asn-138 carries an N-linked (GlcNAc...) asparagine glycan. Residue Thr-157 participates in 4-aminobutanoate binding. Cys-166 and Cys-180 form a disulfide bridge. Residues 254 to 274 (VIQTYLPCIMTVILSQVSFWL) form a helical membrane-spanning segment. The Cytoplasmic portion of the chain corresponds to 275 to 279 (NRESV). The chain crosses the membrane as a helical span at residues 280-301 (PARTVFGVTTVLTMTTLSISAR). Residues 302-311 (NSLPKVAYAT) lie on the Extracellular side of the membrane. Residues 312–333 (AMDWFIAVCYAFVFSALIEFAT) form a helical membrane-spanning segment. Topologically, residues 334–421 (VNYFTKRGYA…TFNSVSKIDR (88 aa)) are cytoplasmic. The helical transmembrane segment at 422–441 (LSRIAFPLLFGIFNLVYWAT) threads the bilayer. The Extracellular segment spans residues 442–456 (YLNREPQLKAPTPHQ).

The protein belongs to the ligand-gated ion channel (TC 1.A.9) family. Gamma-aminobutyric acid receptor (TC 1.A.9.5) subfamily. GABRA1 sub-subfamily. As to quaternary structure, heteropentamer, formed by a combination of alpha (GABRA1-6), beta (GABRB1-3), gamma (GABRG1-3), delta (GABRD), epsilon (GABRE), rho (GABRR1-3), pi (GABRP) and theta (GABRQ) subunits, each subunit exhibiting distinct physiological and pharmacological properties. Interacts with UBQLN1. Interacts with TRAK1. Interacts with KIF21B. Identified in a complex of 720 kDa composed of LHFPL4, NLGN2, GABRA1, GABRB2, GABRG2 and GABRB3. Interacts with LHFPL4. Interacts with NLGN2. Interacts with SHISA7; interaction leads to the regulation of GABA(A) receptor trafficking, channel deactivation kinetics and pharmacology.

The protein resides in the postsynaptic cell membrane. It is found in the cell membrane. Its subcellular location is the cytoplasmic vesicle membrane. It catalyses the reaction chloride(in) = chloride(out). Its activity is regulated as follows. Allosterically activated by benzodiazepines, the neuroanesthetic alphaxalone and pentobarbital. Inhibited by the antagonist bicuculline. Potentiated by histamine. Its function is as follows. Alpha subunit of the heteropentameric ligand-gated chloride channel gated by gamma-aminobutyric acid (GABA), a major inhibitory neurotransmitter in the brain. GABA-gated chloride channels, also named GABA(A) receptors (GABAAR), consist of five subunits arranged around a central pore and contain GABA active binding site(s) located at the alpha and beta subunit interface(s). When activated by GABA, GABAARs selectively allow the flow of chloride anions across the cell membrane down their electrochemical gradient. Alpha-1/GABRA1-containing GABAARs are largely synaptic. Chloride influx into the postsynaptic neuron following GABAAR opening decreases the neuron ability to generate a new action potential, thereby reducing nerve transmission. GABAARs containing alpha-1 and beta-2 or -3 subunits exhibit synaptogenic activity; the gamma-2 subunit being necessary but not sufficient to induce rapid synaptic contacts formation. GABAARs function also as histamine receptor where histamine binds at the interface of two neighboring beta subunits and potentiates GABA response. GABAARs containing alpha, beta and epsilon subunits also permit spontaneous chloride channel activity while preserving the structural information required for GABA-gated openings. Alpha-1-mediated plasticity in the orbitofrontal cortex regulates context-dependent action selection. Together with rho subunits, may also control neuronal and glial GABAergic transmission in the cerebellum. This is Gamma-aminobutyric acid receptor subunit alpha-1 (GABRA1) from Macaca fascicularis (Crab-eating macaque).